A 529-amino-acid chain; its full sequence is MSPSEYALEVAKRRTFAIISHPDAGKTTITEKVLLFGHAIQTAGTVKGRGSSHHAKSDWMEMEKQRGISITTSVMQFPYGGCLVNLLDTPGHEDFSEDTYRTLTAVDCCLMVIDAAKGVEDRTRKLMEVTRLRDTPILTFMNKLDREIRDPMEVLDEVERELNIACSPITWPIGCGKSFKGVYHLHKDETYLYQSGKGHTIQEVRIVKGLNNPDLDVAVGEDLAKQFRQELELVQGASHEFDHEAFLSGDLTPVFFGTALGNFGVDHMLDGLVEWAPAPMPRKTDTRVVVASEEKFTGFVFKIQANMDPKHRDRVAFMRVVSGRFEKGMKLRQVRTKKDVVISDALTFMAGDRSHVEEAYAGDIIGLHNHGTIQIGDTFTQGEDMKFTGIPNFAPELFRRIRLRDPLKQKQLLKGLVQLSEEGAVQVFRPLSNNDLIVGAVGVLQFEVVSSRLKSEYNVEAVYESVNVSTARWVECHDVKKFEEFKRKNELNLALDGGDNLSYIAPTMVNLNITQERYPDVIFRKTREH.

The tr-type G domain occupies 11–280 (AKRRTFAIIS…GLVEWAPAPM (270 aa)). Residues 20–27 (SHPDAGKT), 88–92 (DTPGH), and 142–145 (NKLD) contribute to the GTP site.

The protein belongs to the TRAFAC class translation factor GTPase superfamily. Classic translation factor GTPase family. PrfC subfamily.

The protein resides in the cytoplasm. Functionally, increases the formation of ribosomal termination complexes and stimulates activities of RF-1 and RF-2. It binds guanine nucleotides and has strong preference for UGA stop codons. It may interact directly with the ribosome. The stimulation of RF-1 and RF-2 is significantly reduced by GTP and GDP, but not by GMP. This Yersinia pestis bv. Antiqua (strain Antiqua) protein is Peptide chain release factor 3.